A 56-amino-acid chain; its full sequence is Attractin (56 aa).

Intrachain disulfides connect C4-C41, C13-C33, and C20-C26. N-linked (GlcNAc...) asparagine glycosylation occurs at N25.

Produced by the albumen gland of the egg cordons.

It localises to the secreted. Water-borne pheromone that attract the marine mollusk Aplysia into breeding aggregations and coordinate male and female reproductive behavior within the aggregation. This is Attractin (ATT) from Aplysia depilans (Sea hare).